A 174-amino-acid chain; its full sequence is 3-hydroxyanthranilate 3,4-dioxygenase (174 aa).

Residue R47 participates in O2 binding. Fe cation-binding residues include H51, E57, and H95. Substrate is bound at residue E57. Substrate contacts are provided by R99 and E110. 4 residues coordinate Fe cation: C125, C128, C162, and C165.

This sequence belongs to the 3-HAO family. As to quaternary structure, homodimer. Fe(2+) serves as cofactor.

The catalysed reaction is 3-hydroxyanthranilate + O2 = (2Z,4Z)-2-amino-3-carboxymuconate 6-semialdehyde. It functions in the pathway cofactor biosynthesis; NAD(+) biosynthesis; quinolinate from L-kynurenine: step 3/3. Inhibited by 4-chloro-3-hydroxyanthranilate. Mechanism of inactivation involves the oxidation of the catalytic active site Fe(2+) to the catalytically inactive Fe(3+) oxidation state, superoxide production, and formation of two disulfide bonds between Cys-125 and Cys-128, and Cys-162 and Cys-165. Enzyme can be reactivated under reducing conditions. Functionally, catalyzes the oxidative ring opening of 3-hydroxyanthranilate to 2-amino-3-carboxymuconate semialdehyde, which spontaneously cyclizes to quinolinate. This is 3-hydroxyanthranilate 3,4-dioxygenase from Cupriavidus metallidurans (strain ATCC 43123 / DSM 2839 / NBRC 102507 / CH34) (Ralstonia metallidurans).